Consider the following 290-residue polypeptide: RxLR effector protein Avr4 (290 aa).

The first 24 residues, 1 to 24 (MRSLHILLVITASLLASLAVSAEA), serve as a signal peptide directing secretion. The interval 33 to 56 (VVENNKDKSRFLRDGGTTEAQTDE) is disordered. A compositionally biased stretch (basic and acidic residues) spans 36–45 (NNKDKSRFLR). The RxLR-dEER signature appears at 42–58 (RFLRDGGTTEAQTDEER). Residues 118–141 (KYERMQWQKLNEGQTLTYMRVGDR) form a W1 motif region. Residues 151-174 (QLLRWVAQKKTVKSVYDDLQIEGF) are W2 motif. The tract at residues 224 to 247 (VFEKWAMEGTHIKSVIKTLNLNNK) is W3 motif. N-linked (GlcNAc...) asparagine glycosylation is present at Asn246. A y motif region spans residues 249–270 (ASEMANNENFPALLKYVKLYLD).

The protein belongs to the RxLR effector family.

It localises to the secreted. The protein localises to the host cytoplasm. It is found in the host nucleus. The protein resides in the host nucleolus. Its subcellular location is the host cytoskeleton. Secreted effector that acts as an elicitor of hypersensitive response (HR) specifically on plants carrying defense protein R4, through its interaction with this protein. The polypeptide is RxLR effector protein Avr4 (Phytophthora mirabilis).